Reading from the N-terminus, the 172-residue chain is S-ribosylhomocysteine lyase (172 aa).

Residues His54, His58, and Cys128 each coordinate Fe cation.

It belongs to the LuxS family. As to quaternary structure, homodimer. The cofactor is Fe cation.

It carries out the reaction S-(5-deoxy-D-ribos-5-yl)-L-homocysteine = (S)-4,5-dihydroxypentane-2,3-dione + L-homocysteine. Functionally, involved in the synthesis of autoinducer 2 (AI-2) which is secreted by bacteria and is used to communicate both the cell density and the metabolic potential of the environment. The regulation of gene expression in response to changes in cell density is called quorum sensing. Catalyzes the transformation of S-ribosylhomocysteine (RHC) to homocysteine (HC) and 4,5-dihydroxy-2,3-pentadione (DPD). The sequence is that of S-ribosylhomocysteine lyase from Vibrio vulnificus (strain CMCP6).